Here is a 311-residue protein sequence, read N- to C-terminus: tRNA-cytidine(32) 2-sulfurtransferase (311 aa).

The PP-loop motif signature appears at 47–52 (SGGKDS). 3 residues coordinate [4Fe-4S] cluster: Cys-122, Cys-125, and Cys-213.

This sequence belongs to the TtcA family. As to quaternary structure, homodimer. The cofactor is Mg(2+). Requires [4Fe-4S] cluster as cofactor.

The protein resides in the cytoplasm. It catalyses the reaction cytidine(32) in tRNA + S-sulfanyl-L-cysteinyl-[cysteine desulfurase] + AH2 + ATP = 2-thiocytidine(32) in tRNA + L-cysteinyl-[cysteine desulfurase] + A + AMP + diphosphate + H(+). It participates in tRNA modification. Catalyzes the ATP-dependent 2-thiolation of cytidine in position 32 of tRNA, to form 2-thiocytidine (s(2)C32). The sulfur atoms are provided by the cysteine/cysteine desulfurase (IscS) system. The polypeptide is tRNA-cytidine(32) 2-sulfurtransferase (Escherichia coli (strain 55989 / EAEC)).